Reading from the N-terminus, the 248-residue chain is Ribosomal RNA small subunit methyltransferase J (248 aa).

Residues Arg-98 to Asp-99, Glu-114 to Arg-115, Ser-150 to Ser-151, and Asp-168 each bind S-adenosyl-L-methionine.

Belongs to the methyltransferase superfamily. RsmJ family.

The protein resides in the cytoplasm. The enzyme catalyses guanosine(1516) in 16S rRNA + S-adenosyl-L-methionine = N(2)-methylguanosine(1516) in 16S rRNA + S-adenosyl-L-homocysteine + H(+). In terms of biological role, specifically methylates the guanosine in position 1516 of 16S rRNA. This Shewanella amazonensis (strain ATCC BAA-1098 / SB2B) protein is Ribosomal RNA small subunit methyltransferase J.